The sequence spans 129 residues: M-zodatoxin-Lt8f (129 aa).

The N-terminal stretch at 1–20 (MKYFVVALALVAAFACIAES) is a signal peptide. Positions 21-60 (KPAESEHELAEVEEENELADLEDAVWLEHLADLSDLEEAR) are excised as a propeptide. Positions 57–60 (EEAR) match the Processing quadruplet motif motif.

In terms of processing, cleavage of the propeptide depends on the processing quadruplet motif (XXXR, with at least one of X being E). In terms of tissue distribution, expressed by the venom gland.

The protein resides in the secreted. In terms of biological role, insecticidal, cytolytic and antimicrobial peptide. Has insecticidal activity against the flesh fly S.carnaria. Has antibacterial activity against the Gram-negative bacteria E.coli. Forms voltage-dependent, ion-permeable channels in membranes. At high concentration causes cell membrane lysis. In Lachesana tarabaevi (Spider), this protein is M-zodatoxin-Lt8f (cit 1-7).